The sequence spans 183 residues: I-kappa-B like protein N2 (183 aa).

ANK repeat units lie at residues 62-95 (DGNT…DLNL) and 99-129 (CHKP…NLEA). The segment at 163-183 (PRQDGSSEDEVSDSEEKSDSE) is disordered.

It belongs to the polydnaviridae I-Kappa-B like protein family.

In terms of biological role, suppresses the host immune response through NF-kappa-B inactivation. Possesses ankyrin repeat domains required for NF-kappa-B binding but lacks the regulatory regions required for dissociation from NF-kappa-B and degradation. Therefore, prevents host NF-kappa-B release and subsequent activation. The chain is I-kappa-B like protein N2 (N5) from Microplitis demolitor (Parasitoid wasp).